The following is a 233-amino-acid chain: 2-C-methyl-D-erythritol 4-phosphate cytidylyltransferase (233 aa).

This sequence belongs to the IspD/TarI cytidylyltransferase family. IspD subfamily.

It catalyses the reaction 2-C-methyl-D-erythritol 4-phosphate + CTP + H(+) = 4-CDP-2-C-methyl-D-erythritol + diphosphate. Its pathway is isoprenoid biosynthesis; isopentenyl diphosphate biosynthesis via DXP pathway; isopentenyl diphosphate from 1-deoxy-D-xylulose 5-phosphate: step 2/6. Its function is as follows. Catalyzes the formation of 4-diphosphocytidyl-2-C-methyl-D-erythritol from CTP and 2-C-methyl-D-erythritol 4-phosphate (MEP). The sequence is that of 2-C-methyl-D-erythritol 4-phosphate cytidylyltransferase from Syntrophotalea carbinolica (strain DSM 2380 / NBRC 103641 / GraBd1) (Pelobacter carbinolicus).